Reading from the N-terminus, the 505-residue chain is Glutamate--tRNA ligase (505 aa).

The short motif at 12–22 is the 'HIGH' region element; that stretch reads PSPTGDPHVGT. A 'KMSKS' region motif is present at residues 253–257; sequence KLSKR. Residue Lys256 participates in ATP binding.

It belongs to the class-I aminoacyl-tRNA synthetase family. Glutamate--tRNA ligase type 1 subfamily. In terms of assembly, monomer.

The protein resides in the cytoplasm. The catalysed reaction is tRNA(Glu) + L-glutamate + ATP = L-glutamyl-tRNA(Glu) + AMP + diphosphate. Catalyzes the attachment of glutamate to tRNA(Glu) in a two-step reaction: glutamate is first activated by ATP to form Glu-AMP and then transferred to the acceptor end of tRNA(Glu). This chain is Glutamate--tRNA ligase, found in Chlamydia caviae (strain ATCC VR-813 / DSM 19441 / 03DC25 / GPIC) (Chlamydophila caviae).